We begin with the raw amino-acid sequence, 304 residues long: ULP1-interacting protein 4 (304 aa).

Residues 72 to 269 (DEYPKEVDEH…SIVKEGDANT (198 aa)) are disordered. The span at 73–83 (EYPKEVDEHSN) shows a compositional bias: basic and acidic residues. Residues 129–149 (TPSLKGNVTFPSPKTAISQDG) are compositionally biased toward polar residues. Ser140 carries the phosphoserine modification. Over residues 155–183 (ETTRKERKYEHAPLNEVPVERDPKEENKE) the composition is skewed to basic and acidic residues. A phosphoserine mark is found at Ser185 and Ser205.

As to quaternary structure, interacts with ULP1.

The protein resides in the endoplasmic reticulum membrane. The protein localises to the mitochondrion outer membrane. Its subcellular location is the nucleus envelope. This chain is ULP1-interacting protein 4 (UIP4), found in Saccharomyces cerevisiae (strain ATCC 204508 / S288c) (Baker's yeast).